A 347-amino-acid chain; its full sequence is Dihydroorotase (347 aa).

Zn(2+)-binding residues include His-17 and His-19. Substrate-binding positions include His-19 to Arg-21 and Asn-45. Positions 102, 139, and 177 each coordinate Zn(2+). Lys-102 bears the N6-carboxylysine mark. His-139 contributes to the substrate binding site. Leu-222 serves as a coordination point for substrate. Residue Asp-250 coordinates Zn(2+). Asp-250 is an active-site residue. Residues His-254 and Ala-266 each coordinate substrate.

Belongs to the metallo-dependent hydrolases superfamily. DHOase family. Class II DHOase subfamily. As to quaternary structure, homodimer. It depends on Zn(2+) as a cofactor.

The enzyme catalyses (S)-dihydroorotate + H2O = N-carbamoyl-L-aspartate + H(+). Its pathway is pyrimidine metabolism; UMP biosynthesis via de novo pathway; (S)-dihydroorotate from bicarbonate: step 3/3. Functionally, catalyzes the reversible cyclization of carbamoyl aspartate to dihydroorotate. This chain is Dihydroorotase, found in Acidovorax sp. (strain JS42).